We begin with the raw amino-acid sequence, 355 residues long: MKKHNFSAGPSILPREVIEETAKAILDFNGSGLSVLEVSHRGKDFQAVMDEAVALFKEILNIPEGYSVLFLGGGASMQFCMVPYNFLEKKAAYLNTGVWAKKAMKEAKGFGEVVEVASSADANYTFIPKDFTIPADADYFHVTTNNTIYGTELKGDLDSPVPMVADMSSDIFSRPVDVSKYICIYGGAQKNLAPSGVTFVIVKDDAVGKVSRYIPSMLNYKTHIDGGSMFNTPPVLPIYSAMQTLRWIKAQGGVKEMDRRATEKADMLYAEIDRNKMFVGTAAKEDRSRMNICFVMAPEYKDLEADFLKFATDKGMSGIKGHRSVGGFRASCYNAMPKESVQALIDCMQEFEKLH.

Arg-41 is an L-glutamate binding site. Pyridoxal 5'-phosphate is bound by residues Ala-75–Ser-76, Trp-99, Thr-147, Asp-166, and Gln-189. An N6-(pyridoxal phosphate)lysine modification is found at Lys-190. A pyridoxal 5'-phosphate-binding site is contributed by Asn-231–Thr-232.

It belongs to the class-V pyridoxal-phosphate-dependent aminotransferase family. SerC subfamily. Homodimer. The cofactor is pyridoxal 5'-phosphate.

It localises to the cytoplasm. It catalyses the reaction O-phospho-L-serine + 2-oxoglutarate = 3-phosphooxypyruvate + L-glutamate. It carries out the reaction 4-(phosphooxy)-L-threonine + 2-oxoglutarate = (R)-3-hydroxy-2-oxo-4-phosphooxybutanoate + L-glutamate. It functions in the pathway amino-acid biosynthesis; L-serine biosynthesis; L-serine from 3-phospho-D-glycerate: step 2/3. The protein operates within cofactor biosynthesis; pyridoxine 5'-phosphate biosynthesis; pyridoxine 5'-phosphate from D-erythrose 4-phosphate: step 3/5. Its function is as follows. Catalyzes the reversible conversion of 3-phosphohydroxypyruvate to phosphoserine and of 3-hydroxy-2-oxo-4-phosphonooxybutanoate to phosphohydroxythreonine. The sequence is that of Phosphoserine aminotransferase from Bacteroides fragilis (strain ATCC 25285 / DSM 2151 / CCUG 4856 / JCM 11019 / LMG 10263 / NCTC 9343 / Onslow / VPI 2553 / EN-2).